The chain runs to 252 residues: Large ribosomal subunit protein uL29m (252 aa).

N6-acetyllysine is present on Lys146. Residues 230 to 240 (KKKEKILHAKF) are compositionally biased toward basic residues. Residues 230–252 (KKKEKILHAKFPHLSQERKSSSV) are disordered.

It belongs to the universal ribosomal protein uL29 family. Component of the mitochondrial ribosome large subunit (39S) which comprises a 16S rRNA and about 50 distinct proteins.

It localises to the mitochondrion. The polypeptide is Large ribosomal subunit protein uL29m (Mrpl47) (Mus musculus (Mouse)).